A 255-amino-acid chain; its full sequence is Indole-3-glycerol phosphate synthase (255 aa).

The protein belongs to the TrpC family.

The catalysed reaction is 1-(2-carboxyphenylamino)-1-deoxy-D-ribulose 5-phosphate + H(+) = (1S,2R)-1-C-(indol-3-yl)glycerol 3-phosphate + CO2 + H2O. It functions in the pathway amino-acid biosynthesis; L-tryptophan biosynthesis; L-tryptophan from chorismate: step 4/5. This is Indole-3-glycerol phosphate synthase from Streptococcus mutans serotype c (strain ATCC 700610 / UA159).